The chain runs to 329 residues: Tagatose 1,6-diphosphate aldolase 2 (329 aa).

Belongs to the aldolase LacD family.

The enzyme catalyses D-tagatofuranose 1,6-bisphosphate = D-glyceraldehyde 3-phosphate + dihydroxyacetone phosphate. It functions in the pathway carbohydrate metabolism; D-tagatose 6-phosphate degradation; D-glyceraldehyde 3-phosphate and glycerone phosphate from D-tagatose 6-phosphate: step 2/2. The polypeptide is Tagatose 1,6-diphosphate aldolase 2 (lacD2) (Streptococcus mutans serotype c (strain ATCC 700610 / UA159)).